Reading from the N-terminus, the 780-residue chain is Reticulon-1 (780 aa).

Disordered stretches follow at residues 1–76 (MAAP…VAME), 128–176 (QKEN…AEST), 201–223 (RPQE…LDFK), and 293–576 (MTAT…IPGP). 2 positions are modified to phosphoserine: S13 and S70. At S327 the chain carries Phosphoserine. Low complexity predominate over residues 328-341 (PGSVTPPSSGTEPS). A phosphoserine mark is found at S350, S352, and S487. Over residues 497-512 (AIREETGSRATEERAP) the composition is skewed to basic and acidic residues. The Reticulon domain maps to 593–780 (AIDLLYWRDI…KIPGAKRHAE (188 aa)). Helical transmembrane passes span 607-627 (IVFG…VVSV) and 709-729 (FAVL…LTLL).

In terms of assembly, interacts with NDRG1. Interacts with BACE1. Interacts with TMEM33.

The protein resides in the endoplasmic reticulum membrane. The protein localises to the golgi apparatus membrane. In terms of biological role, inhibits amyloid precursor protein processing, probably by blocking BACE1 activity. This is Reticulon-1 (Rtn1) from Mus musculus (Mouse).